A 69-amino-acid chain; its full sequence is Sodium channel toxin (69 aa).

The 65-residue stretch at 2–66 folds into the LCN-type CS-alpha/beta domain; the sequence is KNDYPVDTAK…SPTKTSGRCN (65 aa). 4 cysteine pairs are disulfide-bonded: C14/C65, C18/C41, C27/C48, and C31/C50.

The protein belongs to the long (4 C-C) scorpion toxin superfamily. Sodium channel inhibitor family. As to expression, expressed by the venom gland.

The protein resides in the secreted. Functionally, inhibits voltage-gated sodium channels (Nav). This is Sodium channel toxin from Tityus metuendus (Scorpion).